We begin with the raw amino-acid sequence, 186 residues long: Ribosome maturation factor RimM (186 aa).

The 83-residue stretch at 100-182 (NEGEYHVSDL…RIEINPPVGL (83 aa)) folds into the PRC barrel domain.

It belongs to the RimM family. Binds ribosomal protein uS19.

It is found in the cytoplasm. In terms of biological role, an accessory protein needed during the final step in the assembly of 30S ribosomal subunit, possibly for assembly of the head region. Essential for efficient processing of 16S rRNA. May be needed both before and after RbfA during the maturation of 16S rRNA. It has affinity for free ribosomal 30S subunits but not for 70S ribosomes. This Rippkaea orientalis (strain PCC 8801 / RF-1) (Cyanothece sp. (strain PCC 8801)) protein is Ribosome maturation factor RimM.